We begin with the raw amino-acid sequence, 331 residues long: Geranylgeranyl transferase type-2 subunit beta (331 aa).

Residue Gly-2 is modified to N-acetylglycine. The residue at position 3 (Thr-3) is a Phosphothreonine. PFTB repeat units follow at residues 20-61 (LEKH…DLMG), 68-109 (REEI…TLYD), 116-157 (VNKV…ALLG), 164-205 (VEKA…AITS), 212-253 (SDLL…KIIG), and 260-302 (REKL…SLLG). 190 to 192 (HAG) provides a ligand contact to geranylgeranyl diphosphate. Zn(2+)-binding residues include Asp-238 and Cys-240. 241–244 (YSWW) serves as a coordination point for geranylgeranyl diphosphate. His-290 contributes to the Zn(2+) binding site.

Belongs to the protein prenyltransferase subunit beta family. Heterotrimer composed of RABGGTA, RABGGTB and CHM; within this trimer, RABGGTA and RABGGTB form the catalytic component B, while CHM (component A) mediates peptide substrate binding. The Rab GGTase dimer (RGGT) interacts with CHM (component A) prior to Rab protein binding; the association is stabilized by geranylgeranyl pyrophosphate (GGpp). The CHM:RGGT:Rab complex is destabilized by GGpp. Interaction of RABGGTB with prenylated PTP4A2 precludes its association with RABGGTA and inhibits enzyme activity. Interacts with CHODL. Interacts with non-phosphorylated form of RAB8A; phosphorylation of RAB8A at 'Thr-72' disrupts this interaction. Requires Zn(2+) as cofactor.

It carries out the reaction geranylgeranyl diphosphate + L-cysteinyl-[protein] = S-geranylgeranyl-L-cysteinyl-[protein] + diphosphate. Its activity is regulated as follows. The enzymatic reaction requires the aid of a Rab escort protein (also called component A). Functionally, catalyzes the transfer of a geranylgeranyl moiety from geranylgeranyl diphosphate to both cysteines of Rab proteins with the C-terminal sequence -XXCC, -XCXC and -CCXX, such as RAB1A, RAB3A, RAB5A and RAB7A. This is Geranylgeranyl transferase type-2 subunit beta (RABGGTB) from Homo sapiens (Human).